The chain runs to 656 residues: Acyl-CoA-binding domain-containing protein 6 (656 aa).

The ACB domain occupies 8–102 (YPDRFYAAAA…LEEEDPGWYS (95 aa)). An acyl-CoA contacts are provided by residues 44–48 (YGLYQ) and lysine 70. Positions 129 to 148 (ASTNGTSVPEPKTISENGSS) are disordered. 6 Kelch repeats span residues 194-241 (KMYI…AQVS), 254-304 (KFFS…LVGT), 305-354 (TLVL…CHAD), 356-405 (YLLI…TVGE), 406-454 (NWYI…LVHS), and 461-507 (YLIS…EPEV). Residues 527–636 (LKKDDANELL…EQAALEAKQR (110 aa)) are a coiled coil. A disordered region spans residues 627-656 (EQAALEAKQRQSSSGMWGWLVGTPPDKSES).

It belongs to the ACBP family. In terms of tissue distribution, highly expressed in leaves. Expressed in roots and seeds.

It is found in the peroxisome. Its function is as follows. Binds medium- and long-chain acyl-CoA esters with high affinity. Can interact in vitro with linoleoyl-CoA and linolenoyl-CoA. Binds phosphatidic acid (PA) and phosphatidylcholine (PC) in vitro. May play a role in the biosynthesis of phospholipids. May be involved in lipid degradation via peroxisomal beta-oxydation. The protein is Acyl-CoA-binding domain-containing protein 6 of Oryza sativa subsp. japonica (Rice).